A 348-amino-acid chain; its full sequence is Protein lifeguard 1 (348 aa).

The interval 1 to 118 (MSHEKSFLVS…GNYQEEGPPS (118 aa)) is disordered. The segment covering 14-41 (YPPPNPGYPVGPQAPMPPYVQPPYPGAP) has biased composition (pro residues). Over residues 42 to 57 (YPQAAFQPSPYGQPGY) the composition is skewed to low complexity. A compositionally biased stretch (pro residues) spans 82–101 (GPYPQSPFPPNPYGQPPPFQ). The next 7 helical transmembrane spans lie at 142 to 162 (VFLV…IFTF), 174 to 194 (VWTY…LSCC), 205 to 225 (LVAL…IASF), 230 to 250 (AVIM…IFSM), 260 to 280 (MGVL…CIFI), 284 to 304 (ILEI…LAVD), and 323 to 343 (FAAL…LTII).

It belongs to the BI1 family. LFG subfamily.

The protein localises to the membrane. Potential apoptotic regulator. The sequence is that of Protein lifeguard 1 (Grina) from Rattus norvegicus (Rat).